The following is a 352-amino-acid chain: Protein MGF 360-16R (352 aa).

The protein belongs to the asfivirus MGF 360 family.

Plays a role in virus cell tropism, and may be required for efficient virus replication in macrophages. The protein is Protein MGF 360-16R of Ornithodoros (relapsing fever ticks).